The chain runs to 393 residues: Branched-chain amino acid aminotransferase 1, mitochondrial (393 aa).

The transit peptide at 1–34 (MIHRGLWLHNLVQSYRVGSSSSSSTLFKLVYRYN) directs the protein to the mitochondrion. Arg138 provides a ligand contact to pyridoxal 5'-phosphate. The active-site Proton acceptor is the Lys240. Position 240 is an N6-(pyridoxal phosphate)lysine (Lys240). Pyridoxal 5'-phosphate is bound at residue Glu276.

The protein belongs to the class-IV pyridoxal-phosphate-dependent aminotransferase family. Requires pyridoxal 5'-phosphate as cofactor. Expressed specifically in lupulin glands.

It localises to the mitochondrion. The enzyme catalyses L-isoleucine + 2-oxoglutarate = (S)-3-methyl-2-oxopentanoate + L-glutamate. It carries out the reaction L-leucine + 2-oxoglutarate = 4-methyl-2-oxopentanoate + L-glutamate. It catalyses the reaction L-valine + 2-oxoglutarate = 3-methyl-2-oxobutanoate + L-glutamate. Its pathway is amino-acid biosynthesis; L-isoleucine biosynthesis; L-isoleucine from 2-oxobutanoate: step 4/4. The protein operates within amino-acid biosynthesis; L-leucine biosynthesis; L-leucine from 3-methyl-2-oxobutanoate: step 4/4. It functions in the pathway amino-acid biosynthesis; L-valine biosynthesis; L-valine from pyruvate: step 4/4. In terms of biological role, converts 2-oxo acids to branched-chain amino acids (BCAA). Shows no kinetic preferences corresponding to anabolic or catabolic functions, but likely involved in BCAA catabolism. This chain is Branched-chain amino acid aminotransferase 1, mitochondrial, found in Humulus lupulus (European hop).